A 373-amino-acid chain; its full sequence is UBX domain-containing protein 1 (373 aa).

2 disordered regions span residues 39–179 (VTEF…QIPR) and 236–293 (IKQH…VDES). Residues 49–59 (TAGSSEPTGQP) show a composition bias toward polar residues. Composition is skewed to low complexity over residues 60–71 (SAKSSSSTPRES) and 85–94 (LGDLASGAAD). A compositionally biased stretch (acidic residues) spans 95–104 (SSDDDDDENQ). Residues 121 to 132 (DDLKKKIIEKAR) are compositionally biased toward basic and acidic residues. Residues 185 to 258 (LHFWADGFSV…KYQPFAGKGQ (74 aa)) form the SEP domain. In terms of domain architecture, UBX spans 292-369 (ESQPVVTLQI…PEFKRGGVVV (78 aa)).

Functionally, involved in CDC48-dependent protein degradation through the ubiquitin/proteasome pathway. The protein is UBX domain-containing protein 1 (ubx1) of Emericella nidulans (strain FGSC A4 / ATCC 38163 / CBS 112.46 / NRRL 194 / M139) (Aspergillus nidulans).